The sequence spans 145 residues: Large ribosomal subunit protein uL13 (145 aa).

The protein belongs to the universal ribosomal protein uL13 family. As to quaternary structure, part of the 50S ribosomal subunit.

Its function is as follows. This protein is one of the early assembly proteins of the 50S ribosomal subunit, although it is not seen to bind rRNA by itself. It is important during the early stages of 50S assembly. This chain is Large ribosomal subunit protein uL13, found in Staphylococcus saprophyticus subsp. saprophyticus (strain ATCC 15305 / DSM 20229 / NCIMB 8711 / NCTC 7292 / S-41).